The chain runs to 308 residues: D-alanine--D-alanine ligase (308 aa).

The ATP-grasp domain occupies 104-304 (KQALVPHGIP…YAELVERIVE (201 aa)). Position 131–187 (131–187 (LPRPYVLKPVNEGSSVGVAIVRDDSNYGNPISRDALGPWQQFDRLLAEPFIKGRELT)) interacts with ATP. Mg(2+) is bound by residues Asp-255, Glu-271, and Asn-273.

Belongs to the D-alanine--D-alanine ligase family. Requires Mg(2+) as cofactor. The cofactor is Mn(2+).

The protein resides in the cytoplasm. The enzyme catalyses 2 D-alanine + ATP = D-alanyl-D-alanine + ADP + phosphate + H(+). It functions in the pathway cell wall biogenesis; peptidoglycan biosynthesis. Its function is as follows. Cell wall formation. This is D-alanine--D-alanine ligase from Sphingopyxis alaskensis (strain DSM 13593 / LMG 18877 / RB2256) (Sphingomonas alaskensis).